Reading from the N-terminus, the 302-residue chain is Sulfate adenylyltransferase subunit 2 (302 aa).

Belongs to the PAPS reductase family. CysD subfamily. Heterodimer composed of CysD, the smaller subunit, and CysN.

It catalyses the reaction sulfate + ATP + H(+) = adenosine 5'-phosphosulfate + diphosphate. Its pathway is sulfur metabolism; hydrogen sulfide biosynthesis; sulfite from sulfate: step 1/3. With CysN forms the ATP sulfurylase (ATPS) that catalyzes the adenylation of sulfate producing adenosine 5'-phosphosulfate (APS) and diphosphate, the first enzymatic step in sulfur assimilation pathway. APS synthesis involves the formation of a high-energy phosphoric-sulfuric acid anhydride bond driven by GTP hydrolysis by CysN coupled to ATP hydrolysis by CysD. The sequence is that of Sulfate adenylyltransferase subunit 2 from Buchnera aphidicola subsp. Acyrthosiphon pisum (strain 5A).